The chain runs to 375 residues: Heat-inducible transcription repressor HrcA (375 aa).

Over residues 307 to 318 (ATDGATHAAASS) the composition is skewed to low complexity. The segment at 307 to 331 (ATDGATHAAASSQTENQSGDDTRQA) is disordered.

The protein belongs to the HrcA family.

Its function is as follows. Negative regulator of class I heat shock genes (grpE-dnaK-dnaJ and groELS operons). Prevents heat-shock induction of these operons. In Bifidobacterium adolescentis (strain ATCC 15703 / DSM 20083 / NCTC 11814 / E194a), this protein is Heat-inducible transcription repressor HrcA.